Consider the following 920-residue polypeptide: Protein translocase subunit SecA (920 aa).

ATP contacts are provided by residues Q85, 103–107 (GEGKT), and D514. Positions 904, 906, 915, and 916 each coordinate Zn(2+).

Belongs to the SecA family. In terms of assembly, monomer and homodimer. Part of the essential Sec protein translocation apparatus which comprises SecA, SecYEG and auxiliary proteins SecDF-YajC and YidC. Zn(2+) is required as a cofactor.

Its subcellular location is the cell inner membrane. The protein localises to the cytoplasm. It carries out the reaction ATP + H2O + cellular proteinSide 1 = ADP + phosphate + cellular proteinSide 2.. Part of the Sec protein translocase complex. Interacts with the SecYEG preprotein conducting channel. Has a central role in coupling the hydrolysis of ATP to the transfer of proteins into and across the cell membrane, serving both as a receptor for the preprotein-SecB complex and as an ATP-driven molecular motor driving the stepwise translocation of polypeptide chains across the membrane. This Janthinobacterium sp. (strain Marseille) (Minibacterium massiliensis) protein is Protein translocase subunit SecA.